A 486-amino-acid polypeptide reads, in one-letter code: MVAVSIDSVIDISAADQSTAASGVAIKDELPNGDYILVAVDIDTTGRRLIDEIVQLAAYTPTDHFEQYIMPYMNLNPAARQRHQVRVISIGFFRMLKSMQTYKIIKSKSEVAALKDFLDWLDQLKSKNPNTDGIVLLYHEERKFIPYMILQSLVKYGMLDRFTKTVKSFVNSFNLAKSSIGDTKHYSLRNLSKILSKAKEDNARVDNDNEADSNSSSADKHVKNGLQKERDEFDGSASVRAKLTFNVALQLSNLDSTEPESSEALSNLFNALKPFTEAISGDVKELDTQNVHLERQNSFRPVFLNYFKTTLYHRVRAVKFRIVLAENGFDLTTLNDIWTEKRIEGLDAALQGIASLKAEDKNELVELLDSFFDPAKVTIKPIIKPSTIRRRNKRNTPAHKPGVGSGSRSASDEFGAGGDKSQSVSSVPDSTTKTPSPIKNGGRPQRKRNSRPSLHTKEVKSAESALNNTAPASISLPNYVPIAATN.

2 disordered regions span residues 202–233 (NARV…RDEF) and 386–477 (STIR…ISLP). Positions 218-233 (ADKHVKNGLQKERDEF) are enriched in basic and acidic residues. Positions 387-397 (TIRRRNKRNTP) are enriched in basic residues. Composition is skewed to polar residues over residues 420–437 (KSQS…TPSP) and 464–476 (SALN…SISL).

Functionally, ensures the proper localization of the mRNA of the bicoid gene to the anterior regions of the oocyte thus playing a fundamental role in the establishment of the polarity of the oocyte. May bind the bcd mRNA. The sequence is that of Maternal protein exuperantia (exu) from Drosophila virilis (Fruit fly).